The following is a 217-amino-acid chain: Proteasome subunit beta type-9 (217 aa).

Positions 1-18 are cleaved as a propeptide — removed in mature form; sequence MLDESLEPGWLSEEVKTG. The Nucleophile role is filled by T19.

It belongs to the peptidase T1B family. In terms of assembly, the 26S proteasome consists of a 20S proteasome core and two 19S regulatory subunits. The 20S proteasome core is composed of 28 subunits that are arranged in four stacked rings, resulting in a barrel-shaped structure. The two end rings are each formed by seven alpha subunits, and the two central rings are each formed by seven beta subunits. The catalytic chamber with the active sites is on the inside of the barrel. Component of the immunoproteasome, where it displaces the equivalent housekeeping subunit PSMB6. Post-translationally, autocleaved. The resulting N-terminal Thr residue of the mature subunit is responsible for the nucleophile proteolytic activity.

Its subcellular location is the cytoplasm. It localises to the nucleus. The catalysed reaction is Cleavage of peptide bonds with very broad specificity.. Functionally, the proteasome is a multicatalytic proteinase complex which is characterized by its ability to cleave peptides with Arg, Phe, Tyr, Leu, and Glu adjacent to the leaving group at neutral or slightly basic pH. The proteasome has an ATP-dependent proteolytic activity. This subunit is involved in antigen processing to generate class I binding peptides. The protein is Proteasome subunit beta type-9 (psmb9) of Oncorhynchus mykiss (Rainbow trout).